Here is an 88-residue protein sequence, read N- to C-terminus: Phage-like element PBSX protein XkdR (88 aa).

The protein to B.subtilis YqbR.

This Bacillus subtilis (strain 168) protein is Phage-like element PBSX protein XkdR (xkdR).